The sequence spans 400 residues: Argininosuccinate synthase (400 aa).

An ATP-binding site is contributed by 8–16; that stretch reads AYSGGLDTS. Y87 provides a ligand contact to L-citrulline. G117 is a binding site for ATP. Positions 119, 123, and 124 each coordinate L-aspartate. N123 lines the L-citrulline pocket. Residues R127, S175, E260, and Y272 each coordinate L-citrulline.

This sequence belongs to the argininosuccinate synthase family. Type 1 subfamily. Homotetramer.

Its subcellular location is the cytoplasm. It carries out the reaction L-citrulline + L-aspartate + ATP = 2-(N(omega)-L-arginino)succinate + AMP + diphosphate + H(+). Its pathway is amino-acid biosynthesis; L-arginine biosynthesis; L-arginine from L-ornithine and carbamoyl phosphate: step 2/3. This is Argininosuccinate synthase from Mycolicibacterium vanbaalenii (strain DSM 7251 / JCM 13017 / BCRC 16820 / KCTC 9966 / NRRL B-24157 / PYR-1) (Mycobacterium vanbaalenii).